Here is a 72-residue protein sequence, read N- to C-terminus: Small ribosomal subunit protein bS20 (72 aa).

This sequence belongs to the bacterial ribosomal protein bS20 family.

Functionally, binds directly to 16S ribosomal RNA. The sequence is that of Small ribosomal subunit protein bS20 (rpsT) from Aeromonas hydrophila.